A 457-amino-acid chain; its full sequence is Adenylosuccinate synthetase (457 aa).

GTP-binding positions include 40–46 (GDEGKGK) and 70–72 (GHT). The Proton acceptor role is filled by D41. Residues D41 and G70 each contribute to the Mg(2+) site. IMP-binding positions include 41 to 44 (DEGK), 68 to 71 (NAGH), T161, R175, N255, T270, and R334. H71 (proton donor) is an active-site residue. 330 to 336 (VTTGRKR) serves as a coordination point for substrate. GTP contacts are provided by residues R336, 362 to 364 (KLD), and 444 to 446 (GVG).

Belongs to the adenylosuccinate synthetase family. Homodimer. The cofactor is Mg(2+).

The protein resides in the cytoplasm. It catalyses the reaction IMP + L-aspartate + GTP = N(6)-(1,2-dicarboxyethyl)-AMP + GDP + phosphate + 2 H(+). It participates in purine metabolism; AMP biosynthesis via de novo pathway; AMP from IMP: step 1/2. Functionally, plays an important role in the de novo pathway and in the salvage pathway of purine nucleotide biosynthesis. Catalyzes the first committed step in the biosynthesis of AMP from IMP. This is Adenylosuccinate synthetase from Caenorhabditis elegans.